Reading from the N-terminus, the 400-residue chain is MKFVDEVQIRVDAGDGGNGCVSFRREKYIPNGGPDGGDGGDGGDVYLVADENLNTLIDYRFERFHAAERGENGQSANCTGRRGKDRILRVPVGTRASDEDTGELLGDLTHHEQKLLVAKGGFHGLGNTRFKSSVNRAPRQKSNGTPGEVRTLKLELLLLADVGMLGLPNAGKSTFIRAVSAARPKVADYPFTTLVPNLGVVRGENSRSFVIADIPGLIEGAAEGAGLGIRFLKHLERCRVLIHLVDICPVDGSDPAENAVTIVRELEKYSPELASKPRWLVFNKMDLILEEEAQEVMDRVKTALNHEGPVYAITAISKEGTKKVCYDILDLLDTMPRQLAEDAKDAIEKVEFKWDDYHKNQLAKAEADALAASKAFDESLDDDEWDDEDDDGVEVIYVRD.

The Obg domain occupies 1–159; that stretch reads MKFVDEVQIR…RTLKLELLLL (159 aa). The region spanning 160 to 333 is the OBG-type G domain; the sequence is ADVGMLGLPN…VCYDILDLLD (174 aa). GTP contacts are provided by residues 166 to 173, 191 to 195, 213 to 216, 283 to 286, and 314 to 316; these read GLPNAGKS, FTTLV, DIPG, NKMD, and TAI. Residues Ser173 and Thr193 each coordinate Mg(2+).

It belongs to the TRAFAC class OBG-HflX-like GTPase superfamily. OBG GTPase family. As to quaternary structure, monomer. Mg(2+) is required as a cofactor.

The protein localises to the cytoplasm. An essential GTPase which binds GTP, GDP and possibly (p)ppGpp with moderate affinity, with high nucleotide exchange rates and a fairly low GTP hydrolysis rate. Plays a role in control of the cell cycle, stress response, ribosome biogenesis and in those bacteria that undergo differentiation, in morphogenesis control. This Aeromonas hydrophila subsp. hydrophila (strain ATCC 7966 / DSM 30187 / BCRC 13018 / CCUG 14551 / JCM 1027 / KCTC 2358 / NCIMB 9240 / NCTC 8049) protein is GTPase Obg.